Reading from the N-terminus, the 497-residue chain is Probable FAD-binding monooxygenase AlmA (497 aa).

A helical membrane pass occupies residues 4–24 (QVDVLIIGAGISGIGLAVHLS). S15, E36, D56, F62, and V104 together coordinate FAD. Residue 54–56 (RSD) participates in NADP(+) binding. NADP(+) is bound by residues 184 to 190 (SGATAIT), 208 to 209 (RS), and 292 to 293 (RL). V395 contributes to the FAD binding site.

It belongs to the FAD-binding monooxygenase family. The cofactor is FAD.

It localises to the cell membrane. It functions in the pathway hydrocarbon metabolism; alkane degradation. Its function is as follows. Is involved in the degradation of n-alkanes with C chain lengths of 32 and longer. Allows Acinetobacter sp. strain DSM 17874 to grow on long-chain n-alkanes such as dotriacontane (C32H66) or hexatriacontane (C36H74) as a sole carbon source. This Acinetobacter sp protein is Probable FAD-binding monooxygenase AlmA.